A 161-amino-acid polypeptide reads, in one-letter code: ATP synthase subunit b (161 aa).

A helical transmembrane segment spans residues 10 to 29 (AVVQLLNFLFLLWILNKLLY).

The protein belongs to the ATPase B chain family. F-type ATPases have 2 components, F(1) - the catalytic core - and F(0) - the membrane proton channel. F(1) has five subunits: alpha(3), beta(3), gamma(1), delta(1), epsilon(1). F(0) has three main subunits: a(1), b(2) and c(10-14). The alpha and beta chains form an alternating ring which encloses part of the gamma chain. F(1) is attached to F(0) by a central stalk formed by the gamma and epsilon chains, while a peripheral stalk is formed by the delta and b chains.

The protein localises to the cell inner membrane. F(1)F(0) ATP synthase produces ATP from ADP in the presence of a proton or sodium gradient. F-type ATPases consist of two structural domains, F(1) containing the extramembraneous catalytic core and F(0) containing the membrane proton channel, linked together by a central stalk and a peripheral stalk. During catalysis, ATP synthesis in the catalytic domain of F(1) is coupled via a rotary mechanism of the central stalk subunits to proton translocation. In terms of biological role, component of the F(0) channel, it forms part of the peripheral stalk, linking F(1) to F(0). The chain is ATP synthase subunit b from Fervidobacterium nodosum (strain ATCC 35602 / DSM 5306 / Rt17-B1).